The primary structure comprises 292 residues: uncharacterized protein (292 aa).

Residues 175–197 (VLNFYFTALPYAIDGIISGIGVF) traverse the membrane as a helical segment.

Its subcellular location is the membrane. This is an uncharacterized protein from Methanocaldococcus jannaschii (strain ATCC 43067 / DSM 2661 / JAL-1 / JCM 10045 / NBRC 100440) (Methanococcus jannaschii).